Here is a 194-residue protein sequence, read N- to C-terminus: dITP/XTP pyrophosphatase (194 aa).

8–13 lines the substrate pocket; it reads TSNPGK. Residues Glu-38 and Asp-67 each coordinate Mg(2+). Residue Asp-67 is the Proton acceptor of the active site. Residues Ser-68, 152–155, Lys-175, and 180–181 contribute to the substrate site; these read FGYD and HR.

It belongs to the HAM1 NTPase family. Homodimer. Mg(2+) serves as cofactor.

It carries out the reaction XTP + H2O = XMP + diphosphate + H(+). It catalyses the reaction dITP + H2O = dIMP + diphosphate + H(+). The catalysed reaction is ITP + H2O = IMP + diphosphate + H(+). In terms of biological role, pyrophosphatase that catalyzes the hydrolysis of nucleoside triphosphates to their monophosphate derivatives, with a high preference for the non-canonical purine nucleotides XTP (xanthosine triphosphate), dITP (deoxyinosine triphosphate) and ITP. Seems to function as a house-cleaning enzyme that removes non-canonical purine nucleotides from the nucleotide pool, thus preventing their incorporation into DNA/RNA and avoiding chromosomal lesions. The sequence is that of dITP/XTP pyrophosphatase from Legionella pneumophila (strain Lens).